Here is a 306-residue protein sequence, read N- to C-terminus: D-alanine--D-alanine ligase (306 aa).

The ATP-grasp domain occupies 101-300 (RIMLAAAGVP…FGELVTWMVE (200 aa)). Residue 128–182 (MPTPYVLKPNAGGSSVGVFIVREDQAHPPQELTREDWPHGENLLAEEFIPGLELT) coordinates ATP. Mg(2+) contacts are provided by Asp-250, Glu-267, and Asn-269.

It belongs to the D-alanine--D-alanine ligase family. Requires Mg(2+) as cofactor. The cofactor is Mn(2+).

Its subcellular location is the cytoplasm. It carries out the reaction 2 D-alanine + ATP = D-alanyl-D-alanine + ADP + phosphate + H(+). Its pathway is cell wall biogenesis; peptidoglycan biosynthesis. Functionally, cell wall formation. In Xanthobacter autotrophicus (strain ATCC BAA-1158 / Py2), this protein is D-alanine--D-alanine ligase.